The primary structure comprises 444 residues: Argininosuccinate synthase (444 aa).

Residues 17-25 and Ala43 contribute to the ATP site; that span reads AFSGGLDTS. Tyr99 lines the L-citrulline pocket. Gly129 and Thr131 together coordinate ATP. Thr131, Asn135, and Asp136 together coordinate L-aspartate. Asn135 provides a ligand contact to L-citrulline. Asp136 lines the ATP pocket. Positions 139 and 192 each coordinate L-citrulline. Asp194 serves as a coordination point for ATP. L-citrulline contacts are provided by Thr201, Glu203, and Glu280.

It belongs to the argininosuccinate synthase family. Type 2 subfamily. In terms of assembly, homotetramer.

Its subcellular location is the cytoplasm. It carries out the reaction L-citrulline + L-aspartate + ATP = 2-(N(omega)-L-arginino)succinate + AMP + diphosphate + H(+). It participates in amino-acid biosynthesis; L-arginine biosynthesis; L-arginine from L-ornithine and carbamoyl phosphate: step 2/3. The protein is Argininosuccinate synthase of Burkholderia lata (strain ATCC 17760 / DSM 23089 / LMG 22485 / NCIMB 9086 / R18194 / 383).